Consider the following 258-residue polypeptide: MAKRLDLNDVNIYYGDFHAVQDVNLHIPPKAVTAFIGPSGCGKSTVLRTLNRMHEVIPGAYVKGEILLDGEDIYGPKIDPVAVRNTIGMVFQKANPFPTMSIEENVVAGLKLSGEKNKKKLREVAERALRGANLWDEVKDRLDKPGGGLSGGQQQRLCIARAIAVEPEVLLMDEPCSALDPISTLAVEDLIHELKEDFTIVIVTHNMQQAARVSDQTAFYSLEATGKPGQLVEVGPTKQIFENPTKKETEDYISGRFG.

An ABC transporter domain is found at 5-253; the sequence is LDLNDVNIYY…PTKKETEDYI (249 aa). Position 37–44 (37–44) interacts with ATP; sequence GPSGCGKS.

Belongs to the ABC transporter superfamily. Phosphate importer (TC 3.A.1.7) family. In terms of assembly, the complex is composed of two ATP-binding proteins (PstB), two transmembrane proteins (PstC and PstA) and a solute-binding protein (PstS).

The protein localises to the cell membrane. The catalysed reaction is phosphate(out) + ATP + H2O = ADP + 2 phosphate(in) + H(+). Functionally, part of the ABC transporter complex PstSACB involved in phosphate import. Responsible for energy coupling to the transport system. The polypeptide is Phosphate import ATP-binding protein PstB (Corynebacterium jeikeium (strain K411)).